The following is a 514-amino-acid chain: MVYRNILQLSVLKVLLIVLIVEATHFGVKYELWQPECELTAELRKTAGVAKMKVNSDLNSFKTLELTKMKLLTFAAKFPESKEALTLRALEAALNTDLRALRDNIANGIDRAVRATAYASEAAGALFSGIQTLHDATDGTTYCLSASGQGSNGNAAMASQGCKPLALPELLTEDSYNTDVISDKGFPKISPLTNAQGQGKSGECGLFQAASGAQATNTGVQFSGGSRINLGLGAIVASAAQQPTRPDLSDFSGTARNQADTLYGKAHASITELLQLAQGPKPGQTEVETMKLLAQKTAALDSIKFQLAASTGKKTSDYKEDENLKTEYFGKTESNIEALWNKVKEEKVKGADPEDPSKESKISDLNTEEQLQRVLDYYAVATMLKLAKQAEDIAKLETEIADQRGKSPEAECNKITEEPKCSEEKICSWHKEVKAGEKNCQFNSTKASKSGVPVTQTQTAGADTTAEKCKGKGEKDCKSPDCKWEGGTCKDSSILANKQFALSVASAAFVALLF.

A signal peptide spans 1–23; that stretch reads MVYRNILQLSVLKVLLIVLIVEA. Cystine bridges form between cysteine 37–cysteine 162 and cysteine 143–cysteine 204. Asparagine 443 carries an N-linked (GlcNAc...) asparagine glycan. Residues 451–476 are disordered; that stretch reads GVPVTQTQTAGADTTAEKCKGKGEKD. The span at 455–464 shows a compositional bias: low complexity; the sequence is TQTQTAGADT. Over residues 465–476 the composition is skewed to basic and acidic residues; the sequence is TAEKCKGKGEKD. The GPI-anchor amidated aspartate moiety is linked to residue aspartate 491. The propeptide at 492-514 is removed in mature form; the sequence is SSILANKQFALSVASAAFVALLF.

The protein localises to the cell membrane. In terms of biological role, VSG forms a coat on the surface of the parasite. The trypanosome evades the immune response of the host by expressing a series of antigenically distinct VSGs from an estimated 1000 VSG genes. This Trypanosoma brucei brucei protein is Variant surface glycoprotein ILTAT 1.24.